Consider the following 115-residue polypeptide: MKLCVIIIASLMVASVSGRLRKIKGTELDKKMLLEKLGHGMDIRFEETPRECSKKAGEKCESNCDCCGYSTLCGYITEGKEVKYQCMSKTSNNEILNTIGLGMNAIENMFSFCFR.

The first 18 residues, 1-18 (MKLCVIIIASLMVASVSG), serve as a signal peptide directing secretion. The propeptide occupies 19-51 (RLRKIKGTELDKKMLLEKLGHGMDIRFEETPRE). 4 disulfides stabilise this stretch: Cys52–Cys67, Cys60–Cys73, Cys64–Cys113, and Cys66–Cys86.

Belongs to the neurotoxin 03 (Tx2) family. 02 subfamily. Expressed by the venom gland.

It localises to the secreted. Functionally, probable ion channel inhibitor. The sequence is that of U31-theraphotoxin-Cg1b from Chilobrachys guangxiensis (Chinese earth tiger tarantula).